Here is a 363-residue protein sequence, read N- to C-terminus: 3-isopropylmalate dehydrogenase (363 aa).

78-91 is a binding site for NAD(+); that stretch reads GPKWEHLPPDQQPE. Substrate contacts are provided by Arg99, Arg109, Arg138, and Asp227. Mg(2+) is bound by residues Asp227, Asp251, and Asp255. 285–297 serves as a coordination point for NAD(+); the sequence is GSAPDIAGKNIAN.

Belongs to the isocitrate and isopropylmalate dehydrogenases family. LeuB type 1 subfamily. Homodimer. Requires Mg(2+) as cofactor. Mn(2+) is required as a cofactor.

Its subcellular location is the cytoplasm. It carries out the reaction (2R,3S)-3-isopropylmalate + NAD(+) = 4-methyl-2-oxopentanoate + CO2 + NADH. It functions in the pathway amino-acid biosynthesis; L-leucine biosynthesis; L-leucine from 3-methyl-2-oxobutanoate: step 3/4. With respect to regulation, requires K(+) ions for optimum activity. Its function is as follows. Catalyzes the oxidation of 3-carboxy-2-hydroxy-4-methylpentanoate (3-isopropylmalate) to 3-carboxy-4-methyl-2-oxopentanoate. The product decarboxylates to 4-methyl-2 oxopentanoate. The sequence is that of 3-isopropylmalate dehydrogenase from Escherichia coli (strain K12).